A 270-amino-acid polypeptide reads, in one-letter code: tRNA (guanine-N(1)-)-methyltransferase (270 aa).

S-adenosyl-L-methionine-binding positions include G119 and 139-144 (IGDYVI).

This sequence belongs to the RNA methyltransferase TrmD family. In terms of assembly, homodimer.

It localises to the cytoplasm. It carries out the reaction guanosine(37) in tRNA + S-adenosyl-L-methionine = N(1)-methylguanosine(37) in tRNA + S-adenosyl-L-homocysteine + H(+). Its function is as follows. Specifically methylates guanosine-37 in various tRNAs. This chain is tRNA (guanine-N(1)-)-methyltransferase, found in Nitrosomonas europaea (strain ATCC 19718 / CIP 103999 / KCTC 2705 / NBRC 14298).